Consider the following 291-residue polypeptide: N-acetylmannosamine kinase (291 aa).

Residues 5–12 (AIDIGGTK) and 132–139 (GVGGGVVS) contribute to the ATP site. Zn(2+) contacts are provided by His156, Cys166, Cys168, and Cys173.

It belongs to the ROK (NagC/XylR) family. NanK subfamily. In terms of assembly, homodimer.

The catalysed reaction is an N-acyl-D-mannosamine + ATP = an N-acyl-D-mannosamine 6-phosphate + ADP + H(+). It participates in amino-sugar metabolism; N-acetylneuraminate degradation; D-fructose 6-phosphate from N-acetylneuraminate: step 2/5. Its function is as follows. Catalyzes the phosphorylation of N-acetylmannosamine (ManNAc) to ManNAc-6-P. This Shigella flexneri serotype 5b (strain 8401) protein is N-acetylmannosamine kinase.